The sequence spans 370 residues: MPPLSLLIKPASSGCNLKCTYCFYHSLSDNRNVKSYGIMRDEVLESMVKRVLNEADGHCSFAFQGGEPILAGLEFFERLMELQRKHNYKNLKIYNSLQTNGTLIDESWAKFLSENKFLVGLSMDGPKEIHNLNRKDCCGLDTFSKVERAAELFKKYKVEFNILCVVTSNTARHVNKIYRYFKEKDFKFLQFINCLDPLYEEKGKYNYSLKPQDYTKFLKNLFDLWYEDFLNGNRVSIRYFDGLLETILLGKSSSCGMNGTCTCQFVVESDGSVYPCDFYVLDKWRLGNIQDMTMKELFETNKNHEFIKSSFKVHEECKKCKWFKLCKGGCRRCRDSKEDSDLELNYYCQSYKEFFEYAFPRLINVANNIK.

Residues 1–227 form the Radical SAM core domain; that stretch reads MPPLSLLIKP…LKNLFDLWYE (227 aa). Residues Cys15 and Cys19 each coordinate [4Fe-4S] cluster. Tyr21 lines the S-adenosyl-L-methionine pocket. Cys22 contributes to the [4Fe-4S] cluster binding site. 4 residues coordinate S-adenosyl-L-methionine: Gly66, Ser122, Arg134, and Leu195. The [4Fe-4S] cluster site is built by Cys255, Cys261, and Cys276. Asp277 acts as the Proton acceptor in catalysis. Positions 317, 320, 326, 330, and 348 each coordinate [4Fe-4S] cluster.

Belongs to the radical SAM superfamily. Anaerobic sulfatase-maturating enzyme family. [4Fe-4S] cluster serves as cofactor.

The enzyme catalyses L-cysteinyl-[sulfatase] + S-adenosyl-L-methionine + H2O = 3-oxo-L-alanyl-[sulfatase] + hydrogen sulfide + 5'-deoxyadenosine + L-methionine + 2 H(+). Its pathway is protein modification; sulfatase oxidation. Involved in 'Cys-type' sulfatase maturation under anaerobic conditions. Catalyzes the post-translational modification of cysteine into 3-oxoalanine (also known as C(alpha)-formylglycine (FGly)), by a free radical chemical mechanism initiated via the reductive cleavage of S-adenosyl-L-methionine (SAM). This chain is Cysteine-type anaerobic sulfatase-maturating enzyme, found in Clostridium perfringens (strain 13 / Type A).